A 348-amino-acid chain; its full sequence is Thioesterase-like protein TwmA (348 aa).

Its pathway is secondary metabolite biosynthesis. Its function is as follows. Thioesterase-like protein; part of the gene cluster that mediates the biosynthesis of wortmanamides A and B, reduced long-chain polyketides amidated with a specific omega-amino acid, 5-aminopentanoic acid (5PA). The PKS modules of TwmB are involved in the synthesis of the polyketide backbone, whereas the non-canonical C domain of TwmB is a bonafide condensation domain that specifically selects 5PA and catalyzes amidation to release polyketide chain. The C domain clearly prefers C16 and C18 fatty acyl substrates, which is consistent with simultaneous formation of both octaketide and nonaketide acyl amides wortmanamides A and B. Because TwmB lacks a designated enoylreductase (ER) domain, the required activity is provided the enoyl reductase TwmE. The roles of the remaining enzymes have still to be clarified. The protein is Thioesterase-like protein TwmA of Talaromyces wortmannii (Penicillium wortmannii).